Consider the following 397-residue polypeptide: Mycinamicin IV hydroxylase/epoxidase (397 aa).

The tract at residues 63 to 86 (RGPSMTRDEPRTRPEMVKGGLLSM) is disordered. Positions 68–78 (TRDEPRTRPEM) are enriched in basic and acidic residues. G81 provides a ligand contact to substrate. 5 residues coordinate heme: H91, R95, R288, H344, and C346.

Belongs to the cytochrome P450 family. Requires heme as cofactor.

It functions in the pathway antibiotic biosynthesis; mycinamicin biosynthesis. Functionally, involved in the biosynthesis of mycinamicin, a 16-membered macrolide antibiotic. Catalyzes consecutive hydroxylation (at C14) and epoxidation (at C12-C13) reactions with mycinamicin IV as initial substrate, leading to mycinamicin II. These reactions require prior dimethylation of 6-deoxyallose to mycinose for effective conversion by the dual function MycG enzyme. The polypeptide is Mycinamicin IV hydroxylase/epoxidase (Micromonospora griseorubida).